A 157-amino-acid chain; its full sequence is UPF0179 protein Mhun_1135 (157 aa).

It belongs to the UPF0179 family.

This is UPF0179 protein Mhun_1135 from Methanospirillum hungatei JF-1 (strain ATCC 27890 / DSM 864 / NBRC 100397 / JF-1).